Consider the following 239-residue polypeptide: MKIIVTKDNIEGGTKAFEIIKKGMEDGDKVLGLATGSSPIPLYDDMCDSDLDFSDMTSINLDEYYGLNPDNDQSYHYFMQKHLFDKKPFKHSYIPNGMAKDIDEEVDRYNDIIAANPIDIQILGIGRNGHIAFNEPGTPFGSLTHKVQLTESTIKANSRFFDNEDEVPRQAICMGIKSIMQSKKIVLLAFGESKQDAVKALVEGPVTEEVPASILQDHPDVTVICDEVAAAKLDPKYRN.

Catalysis depends on D62, which acts as the Proton acceptor; for enolization step. Residue N128 is the For ring-opening step of the active site. The active-site Proton acceptor; for ring-opening step is the H130. Residue E135 is the For ring-opening step of the active site.

It belongs to the glucosamine/galactosamine-6-phosphate isomerase family. NagB subfamily.

The catalysed reaction is alpha-D-glucosamine 6-phosphate + H2O = beta-D-fructose 6-phosphate + NH4(+). It participates in amino-sugar metabolism; N-acetylneuraminate degradation; D-fructose 6-phosphate from N-acetylneuraminate: step 5/5. In terms of biological role, catalyzes the reversible isomerization-deamination of glucosamine 6-phosphate (GlcN6P) to form fructose 6-phosphate (Fru6P) and ammonium ion. The polypeptide is Glucosamine-6-phosphate deaminase (Lactobacillus johnsonii (strain CNCM I-12250 / La1 / NCC 533)).